The following is a 222-amino-acid chain: Exosome complex component Rrp4 (222 aa).

The region spanning Gly-63 to Arg-131 is the S1 motif domain.

It belongs to the RRP4 family. Component of the archaeal exosome complex. Forms a trimer of Rrp4 and/or Csl4 subunits. The trimer associates with a hexameric ring-like arrangement composed of 3 Rrp41-Rrp42 heterodimers.

It localises to the cytoplasm. In terms of biological role, non-catalytic component of the exosome, which is a complex involved in RNA degradation. Increases the RNA binding and the efficiency of RNA degradation. Confers strong poly(A) specificity to the exosome. The sequence is that of Exosome complex component Rrp4 from Methanosphaera stadtmanae (strain ATCC 43021 / DSM 3091 / JCM 11832 / MCB-3).